The sequence spans 201 residues: NAD(P)H dehydrogenase (quinone) (201 aa).

The 186-residue stretch at 7–192 folds into the Flavodoxin-like domain; the sequence is ILVLYYSMYG…SIARYQGEYV (186 aa). FMN-binding positions include 13–18 and 81–83; these read SMYGHI and TRF. Tyr-15 is an NAD(+) binding site. Trp-101 provides a ligand contact to substrate. Residues 116-121 and His-136 contribute to the FMN site; that span reads STGTGG.

It belongs to the WrbA family. Requires FMN as cofactor.

The enzyme catalyses a quinone + NADH + H(+) = a quinol + NAD(+). The catalysed reaction is a quinone + NADPH + H(+) = a quinol + NADP(+). The protein is NAD(P)H dehydrogenase (quinone) of Shigella sonnei (strain Ss046).